The primary structure comprises 145 residues: Basic phospholipase A2 PC17 (145 aa).

An N-terminal signal peptide occupies residues 1–21; it reads MYPAHLLLLLAVCVSLLGASA. Residues 22-27 constitute a propeptide that is removed on maturation; sequence IPPLPL. 7 cysteine pairs are disulfide-bonded: Cys38–Cys98, Cys54–Cys144, Cys56–Cys72, Cys71–Cys125, Cys78–Cys118, Cys87–Cys111, and Cys105–Cys116. Tyr55, Gly57, and Gly59 together coordinate Ca(2+). Residue His75 is part of the active site. Asp76 lines the Ca(2+) pocket. Asp119 is a catalytic residue.

Belongs to the phospholipase A2 family. Group I subfamily. D49 sub-subfamily. It depends on Ca(2+) as a cofactor.

The protein localises to the secreted. It carries out the reaction a 1,2-diacyl-sn-glycero-3-phosphocholine + H2O = a 1-acyl-sn-glycero-3-phosphocholine + a fatty acid + H(+). In terms of biological role, PLA2 catalyzes the calcium-dependent hydrolysis of the 2-acyl groups in 3-sn-phosphoglycerides. The protein is Basic phospholipase A2 PC17 of Laticauda laticaudata (Blue-ringed sea krait).